The sequence spans 405 residues: uncharacterized protein (405 aa).

Transmembrane regions (helical) follow at residues 19-39 (ILSIVMFNFASYLTIGLPLAV), 47-67 (VMGFSAFWAGLVISLQYFATL), 85-105 (IVVFGLCGCFLSGLGYLTAGL), 129-149 (SFAGTGSTLWGVGVVGSLHIG), 157-177 (IVTYGAMAMGAPLGVVFYHWG), 178-198 (GLQALALIIMGVALVAILLAI), 224-244 (GMALALASAGFGVIATFITLF), 252-272 (GAAFALTLFSCAFVGTRLLFP), 283-303 (VAMICFSVEIIGLLLVGVATM), 309-329 (IGVLLAGAGFSLVFPALGVVA), 344-364 (TYTVFMDLSLGVTGPLAGLVM), and 366-386 (WAGVPVIYLAAAGLVAIALLL).

Belongs to the major facilitator superfamily. YhhS family.

It localises to the cell inner membrane. This is an uncharacterized protein from Escherichia coli O157:H7.